A 307-amino-acid polypeptide reads, in one-letter code: Oxygen-dependent coproporphyrinogen-III oxidase (307 aa).

Ser99 is a binding site for substrate. Residues His103 and His113 each contribute to the a divalent metal cation site. Catalysis depends on His113, which acts as the Proton donor. 115 to 117 serves as a coordination point for substrate; sequence NVR. A divalent metal cation contacts are provided by His152 and His182. The tract at residues 247–282 is important for dimerization; that stretch reads YVEFNLVFDRGTLFGLQSGGRTESILMSMPPVANWR. Substrate is bound at residue 265–267; it reads GGR.

The protein belongs to the aerobic coproporphyrinogen-III oxidase family. Homodimer. It depends on a divalent metal cation as a cofactor.

It localises to the cytoplasm. The catalysed reaction is coproporphyrinogen III + O2 + 2 H(+) = protoporphyrinogen IX + 2 CO2 + 2 H2O. It functions in the pathway porphyrin-containing compound metabolism; protoporphyrin-IX biosynthesis; protoporphyrinogen-IX from coproporphyrinogen-III (O2 route): step 1/1. Involved in the heme biosynthesis. Catalyzes the aerobic oxidative decarboxylation of propionate groups of rings A and B of coproporphyrinogen-III to yield the vinyl groups in protoporphyrinogen-IX. The sequence is that of Oxygen-dependent coproporphyrinogen-III oxidase from Burkholderia multivorans (strain ATCC 17616 / 249).